We begin with the raw amino-acid sequence, 336 residues long: Ribosomal RNA small subunit methyltransferase C (336 aa).

Belongs to the methyltransferase superfamily. RsmC family. As to quaternary structure, monomer.

It is found in the cytoplasm. The catalysed reaction is guanosine(1207) in 16S rRNA + S-adenosyl-L-methionine = N(2)-methylguanosine(1207) in 16S rRNA + S-adenosyl-L-homocysteine + H(+). Functionally, specifically methylates the guanine in position 1207 of 16S rRNA in the 30S particle. In Hamiltonella defensa subsp. Acyrthosiphon pisum (strain 5AT), this protein is Ribosomal RNA small subunit methyltransferase C.